Reading from the N-terminus, the 309-residue chain is Ribosomal RNA small subunit methyltransferase H (309 aa).

Residues 34-36 (GGH), Asp-54, Phe-80, Asp-102, and Gln-109 each bind S-adenosyl-L-methionine.

This sequence belongs to the methyltransferase superfamily. RsmH family.

The protein localises to the cytoplasm. The enzyme catalyses cytidine(1402) in 16S rRNA + S-adenosyl-L-methionine = N(4)-methylcytidine(1402) in 16S rRNA + S-adenosyl-L-homocysteine + H(+). Functionally, specifically methylates the N4 position of cytidine in position 1402 (C1402) of 16S rRNA. The protein is Ribosomal RNA small subunit methyltransferase H of Cellvibrio japonicus (strain Ueda107) (Pseudomonas fluorescens subsp. cellulosa).